A 152-amino-acid polypeptide reads, in one-letter code: MFRGASAINLDTKGRIAIPKRYREPLRAEYNGQLVITVDFQSSCLLLYPLDEWSKIEAKLLLLSDTRASERAMKRLLLGYAHECELDGNGRLLLPPPLRQYANLEKHAMLVGQLNKFELWDEAAWQQQIEQSRETIRSEEFASNERLADFSL.

SpoVT-AbrB domains are found at residues 5-52 (ASAI…PLDE) and 81-124 (AHEC…DEAA).

Belongs to the MraZ family. In terms of assembly, forms oligomers.

It localises to the cytoplasm. It is found in the nucleoid. In Shewanella violacea (strain JCM 10179 / CIP 106290 / LMG 19151 / DSS12), this protein is Transcriptional regulator MraZ.